The sequence spans 191 residues: Scytalone dehydratase PfmaJ (191 aa).

Residues Tyr-25, Tyr-45, and Phe-48 each contribute to the substrate site. Residues His-80 and His-105 contribute to the active site. Asn-126 is a binding site for substrate.

The protein belongs to the scytalone dehydratase family. In terms of assembly, homotrimer. Each subunit contains an active site, located in the central part of the hydrophobic core of the monomer, which functions independently.

The protein resides in the endosome. It carries out the reaction scytalone = 1,3,8-trihydroxynaphthalene + H2O. It participates in pigment biosynthesis; melanin biosynthesis. Its function is as follows. Scytalone dehydratase involved the biosynthesis of dihydroxynaphthalene (DHN)-melanin, a bluish-green pigment forming a dark layer in the conidial wall that protects the conidia from UV radiations. The first step of the pathway is the production of the pentaketide 1,3,6,8-tetrahydroxynaphthalene (1,3,6,8-THN or T4HN) by the polyketide synthase PfmaE though condensation of acetyl-CoA with malonyl-CoA. T4HN is not stable and easily oxidizes into the stable form flaviolin. T4HN is also substrate of the hydroxynaphthalene reductase PfmaG to yield scytalone. The scytalone dehydratase PfmaJ then reduces scytalone to 1,3,8-THN. 1,3,8-THN is then substrate of the hydroxynaphthalene reductase PfmaI to yield vermelone. Vermelone is further converted by the multicopper oxidase PfmaD to 1,8-DHN. Finally the laccase PFICI_06862 transforms 1,8-DHN to DHN-melanin. The roles of the 5-oxoprolinase PfmaA and the proline iminopeptidase PfmaB within the cluster have not been elucidated yet. In Pestalotiopsis fici (strain W106-1 / CGMCC3.15140), this protein is Scytalone dehydratase PfmaJ.